A 78-amino-acid chain; its full sequence is Toxin OAIP 5 (78 aa).

The signal sequence occupies residues 1–19; that stretch reads MLIVILTCALLVIYHAAAA. Positions 20-40 are excised as a propeptide; it reads EELEAKDVIESKALATLDEER. Cystine bridges form between Cys43–Cys56, Cys47–Cys70, and Cys64–Cys75.

Belongs to the neurotoxin 12 (Hwtx-2) family. 05 (OAIP-5) subfamily. Expressed by the venom gland.

It localises to the secreted. In terms of biological role, probable ion channel inhibitor. Shows insecticidal activity when injected into mealworms. The protein is Toxin OAIP 5 of Selenotypus plumipes (Australian featherleg tarantula).